Reading from the N-terminus, the 280-residue chain is Proteasome subunit beta (280 aa).

Positions 1–53 (MSEYSAGRSGFSPAYLDRVGSSFTDFLAAAAPHLLPGSRPVPQIPVGNVTPHG) are cleaved as a propeptide — removed in mature form; by autocatalysis. Catalysis depends on T54, which acts as the Nucleophile.

It belongs to the peptidase T1B family. The 20S proteasome core is composed of 14 alpha and 14 beta subunits that assemble into four stacked heptameric rings, resulting in a barrel-shaped structure. The two inner rings, each composed of seven catalytic beta subunits, are sandwiched by two outer rings, each composed of seven alpha subunits. The catalytic chamber with the active sites is on the inside of the barrel. Has a gated structure, the ends of the cylinder being occluded by the N-termini of the alpha-subunits. Is capped by the proteasome-associated ATPase, ARC.

It localises to the cytoplasm. The catalysed reaction is Cleavage of peptide bonds with very broad specificity.. It participates in protein degradation; proteasomal Pup-dependent pathway. Its activity is regulated as follows. The formation of the proteasomal ATPase ARC-20S proteasome complex, likely via the docking of the C-termini of ARC into the intersubunit pockets in the alpha-rings, may trigger opening of the gate for substrate entry. Interconversion between the open-gate and close-gate conformations leads to a dynamic regulation of the 20S proteasome proteolysis activity. In terms of biological role, component of the proteasome core, a large protease complex with broad specificity involved in protein degradation. The chain is Proteasome subunit beta from Geodermatophilus obscurus (strain ATCC 25078 / DSM 43160 / JCM 3152 / CCUG 61914 / KCC A-0152 / KCTC 9177 / NBRC 13315 / NRRL B-3577 / G-20).